Here is a 423-residue protein sequence, read N- to C-terminus: Protein CLP1 homolog (423 aa).

Residues Glu16, Lys57, and Asp119–Thr124 each bind ATP.

This sequence belongs to the Clp1 family. Clp1 subfamily.

It is found in the nucleus. Its function is as follows. Required for endonucleolytic cleavage during polyadenylation-dependent pre-mRNA 3'-end formation. The sequence is that of Protein CLP1 homolog (cbc) from Drosophila simulans (Fruit fly).